Here is a 99-residue protein sequence, read N- to C-terminus: Ferredoxin, heterocyst (99 aa).

In terms of domain architecture, 2Fe-2S ferredoxin-type spans 4 to 96 (YQVRLINKKQ…NCTIKTHQEP (93 aa)). [2Fe-2S] cluster contacts are provided by C42, C47, C50, and C80.

This sequence belongs to the 2Fe2S plant-type ferredoxin family. Requires [2Fe-2S] cluster as cofactor.

Functionally, ferredoxins are iron-sulfur proteins that transfer electrons in a wide variety of metabolic reactions. Donates electrons to the nitrogenase. The protein is Ferredoxin, heterocyst (fdxH) of Nostoc sp. (strain PCC 7120 / SAG 25.82 / UTEX 2576).